Here is a 440-residue protein sequence, read N- to C-terminus: Beta-1,3-galactosyl-O-glycosyl-glycoprotein beta-1,6-N-acetylglucosaminyltransferase 3 (440 aa).

Topologically, residues 1–12 (MKMTGWKKKLCR) are cytoplasmic. A helical; Signal-anchor for type II membrane protein membrane pass occupies residues 13 to 30 (GHHLWALGCYMLLAVVAL). Residues 31–440 (RLSLRLKCDV…RHKAIYGTEL (410 aa)) lie on the Lumenal side of the membrane. N72 and N108 each carry an N-linked (GlcNAc...) asparagine glycan. Intrachain disulfides connect C73–C230, C164–C384, C185–C212, and C393–C425.

It belongs to the glycosyltransferase 14 family. Post-translationally, N-glycosylated. Primarily expressed in mucus-secreting tissues.

The protein resides in the golgi apparatus membrane. The catalysed reaction is a 3-O-[beta-D-galactosyl-(1-&gt;3)-N-acetyl-alpha-D-galactosaminyl]-L-seryl-[protein] + UDP-N-acetyl-alpha-D-glucosamine = 3-O-{beta-D-galactosyl-(1-&gt;3)-[N-acetyl-beta-D-glucosaminyl-(1-&gt;6)]-N-acetyl-alpha-D-galactosaminyl}-L-seryl-[protein] + UDP + H(+). It carries out the reaction a 3-O-[beta-D-galactosyl-(1-&gt;3)-N-acetyl-alpha-D-galactosaminyl]-L-threonyl-[protein] + UDP-N-acetyl-alpha-D-glucosamine = a 3-O-{beta-D-galactosyl-(1-&gt;3)-[N-acetyl-beta-D-glucosaminyl-(1-&gt;6)]-N-acetyl-alpha-D-galactosaminyl}-L-threonyl-[protein] + UDP + H(+). The enzyme catalyses a beta-D-Gal-(1-&gt;4)-beta-D-GlcNAc-(1-&gt;3)-beta-D-Gal-(1-&gt;4)-beta-D-GlcNAc derivative + UDP-N-acetyl-alpha-D-glucosamine = a beta-D-Gal-(1-&gt;4)-beta-D-GlcNAc-(1-&gt;3)-[beta-D-GlcNAc-(1-&gt;6)]-beta-D-Gal-(1-&gt;4)-N-acetyl-beta-D-glucosaminyl derivative + UDP + H(+). It catalyses the reaction 3-O-[N-acetyl-beta-D-glucosaminyl-(1-&gt;3)-N-acetyl-alpha-D-galactosaminyl]-L-seryl-[protein] + UDP-N-acetyl-alpha-D-glucosamine = 3-O-[N-acetyl-beta-D-glucosaminyl-(1-&gt;3)-[N-acetyl-beta-D-glucosaminyl-(1-&gt;6)]-N-acetyl-alpha-D-galactosaminyl]-L-seryl-[protein] + UDP + H(+). The catalysed reaction is a 3-O-[N-acetyl-beta-D-glucosaminyl-(1-&gt;3)-N-acetyl-alpha-D-galactosaminyl]-L-threonyl-[protein] + UDP-N-acetyl-alpha-D-glucosamine = 3-O-[N-acetyl-beta-D-glucosaminyl-(1-&gt;3)-[N-acetyl-beta-D-glucosaminyl-(1-&gt;6)]-N-acetyl-alpha-D-galactosaminyl]-L-threonyl-[protein] + UDP + H(+). The protein operates within protein modification; protein glycosylation. Its function is as follows. Glycosyltransferase that can synthesize all known mucin beta 6 N-acetylglucosaminides. Mediates core 2 and core 4 O-glycan branching, 2 important steps in mucin-type biosynthesis. Also has I-branching enzyme activity by converting linear into branched poly-N-acetyllactosaminoglycans, leading to introduce the blood group I antigen during embryonic development. This Bos taurus (Bovine) protein is Beta-1,3-galactosyl-O-glycosyl-glycoprotein beta-1,6-N-acetylglucosaminyltransferase 3 (GCNT3).